The following is a 542-amino-acid chain: Carboxypeptidase Y (542 aa).

The N-terminal stretch at Met1–Ala21 is a signal peptide. Positions Leu22–Arg127 are excised as a propeptide. Intrachain disulfides connect Cys182–Cys421, Cys316–Cys330, Cys340–Cys363, Cys347–Cys356, and Cys385–Cys391. Asn213 carries N-linked (GlcNAc...) asparagine glycosylation. Ser269 is a catalytic residue. An N-linked (GlcNAc...) asparagine glycan is attached at Asn291. Asp461 is an active-site residue. Cys464 provides a ligand contact to substrate. Residue His518 is part of the active site. Residue Met519 coordinates substrate.

This sequence belongs to the peptidase S10 family.

The protein localises to the vacuole. It carries out the reaction Release of a C-terminal amino acid with broad specificity.. Its function is as follows. Involved in degradation of small peptides. In Candida albicans (Yeast), this protein is Carboxypeptidase Y (CPY1).